The chain runs to 76 residues: DNA-directed RNA polymerase subunit omega (76 aa).

The protein belongs to the RNA polymerase subunit omega family. In cyanobacteria the RNAP catalytic core is composed of 2 alpha, 1 beta, 1 beta', 1 gamma and 1 omega subunit. When a sigma factor is associated with the core the holoenzyme is formed, which can initiate transcription.

It carries out the reaction RNA(n) + a ribonucleoside 5'-triphosphate = RNA(n+1) + diphosphate. Functionally, promotes RNA polymerase assembly. Latches the N- and C-terminal regions of the beta' subunit thereby facilitating its interaction with the beta and alpha subunits. In Synechocystis sp. (strain ATCC 27184 / PCC 6803 / Kazusa), this protein is DNA-directed RNA polymerase subunit omega (rpoZ).